The sequence spans 778 residues: Lon protease (778 aa).

Positions 8–202 (LPLIPLRGLI…NVLTVIKDEL (195 aa)) constitute a Lon N-terminal domain. 354–361 (GPPGVGKT) serves as a coordination point for ATP. The 182-residue stretch at 591–772 (EDKIGVVTGM…DTVLENALIG (182 aa)) folds into the Lon proteolytic domain. Active-site residues include serine 678 and lysine 721.

The protein belongs to the peptidase S16 family. As to quaternary structure, homohexamer. Organized in a ring with a central cavity.

The protein resides in the cytoplasm. The enzyme catalyses Hydrolysis of proteins in presence of ATP.. In terms of biological role, ATP-dependent serine protease that mediates the selective degradation of mutant and abnormal proteins as well as certain short-lived regulatory proteins. Required for cellular homeostasis and for survival from DNA damage and developmental changes induced by stress. Degrades polypeptides processively to yield small peptide fragments that are 5 to 10 amino acids long. Binds to DNA in a double-stranded, site-specific manner. The sequence is that of Lon protease from Clostridium acetobutylicum (strain ATCC 824 / DSM 792 / JCM 1419 / IAM 19013 / LMG 5710 / NBRC 13948 / NRRL B-527 / VKM B-1787 / 2291 / W).